The primary structure comprises 147 residues: Large ribosomal subunit protein uL16 (147 aa).

The protein belongs to the universal ribosomal protein uL16 family. Part of the 50S ribosomal subunit.

Its function is as follows. Binds 23S rRNA and is also seen to make contacts with the A and possibly P site tRNAs. The protein is Large ribosomal subunit protein uL16 of Finegoldia magna (strain ATCC 29328 / DSM 20472 / WAL 2508) (Peptostreptococcus magnus).